Consider the following 341-residue polypeptide: UDP-3-O-(3-hydroxymyristoyl)glucosamine N-acyltransferase (341 aa).

Residue His239 is the Proton acceptor of the active site.

The protein belongs to the transferase hexapeptide repeat family. LpxD subfamily. In terms of assembly, homotrimer.

It catalyses the reaction a UDP-3-O-[(3R)-3-hydroxyacyl]-alpha-D-glucosamine + a (3R)-hydroxyacyl-[ACP] = a UDP-2-N,3-O-bis[(3R)-3-hydroxyacyl]-alpha-D-glucosamine + holo-[ACP] + H(+). The enzyme catalyses UDP-3-O-[(3R)-3-hydroxytetradecanoyl]-alpha-D-glucosamine + (3R)-hydroxytetradecanoyl-[ACP] = UDP-2-N,3-O-bis[(3R)-3-hydroxytetradecanoyl]-alpha-D-glucosamine + holo-[ACP] + H(+). It functions in the pathway glycolipid biosynthesis; lipid IV(A) biosynthesis; lipid IV(A) from (3R)-3-hydroxytetradecanoyl-[acyl-carrier-protein] and UDP-N-acetyl-alpha-D-glucosamine: step 3/6. In terms of biological role, catalyzes the N-acylation of UDP-3-O-(hydroxytetradecanoyl)glucosamine using 3-hydroxytetradecanoyl-ACP as the acyl donor. Is involved in the biosynthesis of lipid A, a phosphorylated glycolipid that anchors the lipopolysaccharide to the outer membrane of the cell. The protein is UDP-3-O-(3-hydroxymyristoyl)glucosamine N-acyltransferase of Salmonella choleraesuis (strain SC-B67).